We begin with the raw amino-acid sequence, 538 residues long: MVKQLKFSEDARQAMLRGVDQLANAVKVTIGPKGRNVVLDKEFTAPLITNDGVTIAKEIELEDPYENMGAKLVQEVANKTNEIAGDGTTTATVLAQAMIQEGLKNVTSGANPVGLRQGIDKAVKVAVEALHENSQKVENKNEIAQVGAISAADEEIGRYISEAMEKVGNDGVITIEESNGLNTELEVVEGMQFDRGYQSPYMVTDSDKMVAELERPYFLVTDKKISSFQDILPLLEQVVQSNRPILIVADEVEGDALTNIVLNRMRGTFTAVAVKAPGFGDRRKAMLEDLAILTGAQVITDDLGLDLKDASIDMLGTASKVEVTKDNTTVVDGDGDENSIDARVSQLKSQIEETESDFDREKLQERLAKLAGGVAVIKVGAASETELKERKLRIEDALNSTRAAVEEGIVAGGGTALVNVYQKVSEIEAEGDIETGVNIVLKALTAPVRQIAENAGLEGSVIVERLKNAEPGVGFNAATNEWVNMLEEGIVDPTKVTRSALQHAASVAAMFLTTEAVVASIPEKNNDQPNMGGMPGMM.

ATP-binding positions include 29 to 32 (TIGP), 86 to 90 (DGTTT), Gly-413, 476 to 478 (NAA), and Asp-492.

The protein belongs to the chaperonin (HSP60) family. As to quaternary structure, forms a cylinder of 14 subunits composed of two heptameric rings stacked back-to-back. Interacts with the co-chaperonin GroES.

Its subcellular location is the cytoplasm. It catalyses the reaction ATP + H2O + a folded polypeptide = ADP + phosphate + an unfolded polypeptide.. Together with its co-chaperonin GroES, plays an essential role in assisting protein folding. The GroEL-GroES system forms a nano-cage that allows encapsulation of the non-native substrate proteins and provides a physical environment optimized to promote and accelerate protein folding. The polypeptide is Chaperonin GroEL (Staphylococcus aureus (strain NCTC 8325 / PS 47)).